The chain runs to 459 residues: Ribulose bisphosphate carboxylase large chain (459 aa).

Substrate-binding residues include N98 and T148. The active-site Proton acceptor is the K150. Residue K152 participates in substrate binding. Mg(2+)-binding residues include K176, D178, and E179. The residue at position 176 (K176) is an N6-carboxylysine. Catalysis depends on H268, which acts as the Proton acceptor. 3 residues coordinate substrate: R269, H301, and S353.

The protein belongs to the RuBisCO large chain family. Type I subfamily. Heterohexadecamer of 8 large chains and 8 small chains. The cofactor is Mg(2+).

Its subcellular location is the plastid. The protein resides in the chloroplast. The catalysed reaction is 2 (2R)-3-phosphoglycerate + 2 H(+) = D-ribulose 1,5-bisphosphate + CO2 + H2O. The enzyme catalyses D-ribulose 1,5-bisphosphate + O2 = 2-phosphoglycolate + (2R)-3-phosphoglycerate + 2 H(+). In terms of biological role, ruBisCO catalyzes two reactions: the carboxylation of D-ribulose 1,5-bisphosphate, the primary event in carbon dioxide fixation, as well as the oxidative fragmentation of the pentose substrate in the photorespiration process. Both reactions occur simultaneously and in competition at the same active site. The chain is Ribulose bisphosphate carboxylase large chain (rbcL) from Calyptrosphaera sphaeroidea.